The chain runs to 253 residues: MRHEENYLDLNNLPDDFSKDGNKQALEEGSSSGQRKKKGSKEGKDESGKVYECRFCSLKFCKSQALGGHMNRHRQERETETLNQARQLVYRNDTITPPGISPFGYHHTTDPTIYRSVYSSPMIYPGSSSTNLVPQPPMPPPPPPYPYSSNQYSPHNHFNDYYLNPSFRGSRSISPSPNLPTTTTVDYMADSPVEPGYTCVGAPIGPTGFPIRGPSIVRAPLEPPQGRDGDASRQRLDHSLRFPINRFQDHHSL.

The segment at 1–46 (MRHEENYLDLNNLPDDFSKDGNKQALEEGSSSGQRKKKGSKEGKDE) is disordered. Residues 16-26 (DFSKDGNKQAL) show a composition bias toward basic and acidic residues. A C2H2-type zinc finger spans residues 51-73 (YECRFCSLKFCKSQALGGHMNRH).

As to quaternary structure, interacts with GATA18/HAN. As to expression, expressed in the emerging leaf, sepal, petal, stamen and carpel primordia. Not expressed in the apical shoot meristem (SAM).

The protein localises to the nucleus. Its function is as follows. Controls the morphogenesis of lateral organs. Functions in lateral organ shape and is sufficient to induce proliferation and growth of lateral organ tissue. Is necessary and sufficient for bract formation, but its expression is excluded from the cryptic bract, which could be a cause of bractless flowers in Arabidopsis. Participates with FIL and YAB3 in regulating valve margin development. Functions with JGL to define stamen and carpel shape. Functions with AS1 and AS2 in the sepal and petal primordia to repress boundary-specifying genes for normal development of the organs. The sequence is that of Zinc finger protein JAGGED (JAG) from Arabidopsis thaliana (Mouse-ear cress).